Reading from the N-terminus, the 992-residue chain is ATP-dependent 6-phosphofructokinase subunit alpha (992 aa).

Residues 1 to 558 (MNNSVYGVAF…LYSNFMSTTV (558 aa)) are N-terminal catalytic PFK domain 1. ATP-binding positions include Gly-193, 256–257 (RS), and 286–289 (GDGS). Asp-287 provides a ligand contact to Mg(2+). Residues 332–334 (SID), Arg-369, 376–378 (MGR), Glu-433, Lys-460, and 466–469 (HVQR) contribute to the beta-D-fructose 6-phosphate site. The Proton acceptor role is filled by Asp-334. The interval 559 to 572 (NDDGSQLLPEADRL) is interdomain linker. The C-terminal regulatory PFK domain 2 stretch occupies residues 573–992 (NIAIVHVGAP…AAKEDSALYV (420 aa)). Residues Arg-643, 700-704 (TVSNN), Arg-738, 745-747 (QGG), Glu-805, Arg-831, 837-840 (HVQQ), and Arg-929 each bind beta-D-fructose 2,6-bisphosphate.

It belongs to the phosphofructokinase type A (PFKA) family. ATP-dependent PFK group I subfamily. Eukaryotic two domain clade 'E' sub-subfamily. In terms of assembly, heterooctamer of 4 alpha and 4 beta chains. The cofactor is Mg(2+).

Its subcellular location is the cytoplasm. It catalyses the reaction beta-D-fructose 6-phosphate + ATP = beta-D-fructose 1,6-bisphosphate + ADP + H(+). It functions in the pathway carbohydrate degradation; glycolysis; D-glyceraldehyde 3-phosphate and glycerone phosphate from D-glucose: step 3/4. Allosterically activated by ADP, AMP, or fructose 2,6-bisphosphate, and allosterically inhibited by ATP or citrate. Catalyzes the phosphorylation of D-fructose 6-phosphate to fructose 1,6-bisphosphate by ATP, the first committing step of glycolysis. The chain is ATP-dependent 6-phosphofructokinase subunit alpha (PFK1) from Kluyveromyces lactis (strain ATCC 8585 / CBS 2359 / DSM 70799 / NBRC 1267 / NRRL Y-1140 / WM37) (Yeast).